The following is a 500-amino-acid chain: L-arabinose isomerase (500 aa).

Mn(2+) is bound by residues Glu306, Glu333, His350, and His450.

The protein belongs to the arabinose isomerase family. As to quaternary structure, homohexamer. Mn(2+) is required as a cofactor.

It catalyses the reaction beta-L-arabinopyranose = L-ribulose. It participates in carbohydrate degradation; L-arabinose degradation via L-ribulose; D-xylulose 5-phosphate from L-arabinose (bacterial route): step 1/3. In terms of biological role, catalyzes the conversion of L-arabinose to L-ribulose. The sequence is that of L-arabinose isomerase from Enterobacter sp. (strain 638).